The chain runs to 459 residues: Cysteine--tRNA ligase (459 aa).

A Zn(2+)-binding site is contributed by Cys-31. The short motif at 33-43 (PTVYYNPHIGN) is the 'HIGH' region element. Zn(2+) contacts are provided by Cys-216, His-241, and Glu-245. The 'KMSKS' region motif lies at 274 to 278 (KMSKS). Lys-277 contacts ATP.

Belongs to the class-I aminoacyl-tRNA synthetase family. Monomer. The cofactor is Zn(2+).

It localises to the cytoplasm. The enzyme catalyses tRNA(Cys) + L-cysteine + ATP = L-cysteinyl-tRNA(Cys) + AMP + diphosphate. The protein is Cysteine--tRNA ligase of Rickettsia rickettsii (strain Iowa).